The primary structure comprises 207 residues: Dephospho-CoA kinase (207 aa).

A DPCK domain is found at 4–203 (VIGLTGGIAS…EEGYIEKPNY (200 aa)). ATP is bound at residue 12–17 (ASGKST).

It belongs to the CoaE family.

It is found in the cytoplasm. It carries out the reaction 3'-dephospho-CoA + ATP = ADP + CoA + H(+). Its pathway is cofactor biosynthesis; coenzyme A biosynthesis; CoA from (R)-pantothenate: step 5/5. Functionally, catalyzes the phosphorylation of the 3'-hydroxyl group of dephosphocoenzyme A to form coenzyme A. In Staphylococcus aureus (strain USA300), this protein is Dephospho-CoA kinase.